Reading from the N-terminus, the 585-residue chain is Proline--tRNA ligase (585 aa).

An Isoglutamyl lysine isopeptide (Lys-Gln) (interchain with Q-Cter in protein Pup) cross-link involves residue Lys173.

It belongs to the class-II aminoacyl-tRNA synthetase family. ProS type 1 subfamily. As to quaternary structure, homodimer.

Its subcellular location is the cytoplasm. The enzyme catalyses tRNA(Pro) + L-proline + ATP = L-prolyl-tRNA(Pro) + AMP + diphosphate. In terms of biological role, catalyzes the attachment of proline to tRNA(Pro) in a two-step reaction: proline is first activated by ATP to form Pro-AMP and then transferred to the acceptor end of tRNA(Pro). As ProRS can inadvertently accommodate and process non-cognate amino acids such as alanine and cysteine, to avoid such errors it has two additional distinct editing activities against alanine. One activity is designated as 'pretransfer' editing and involves the tRNA(Pro)-independent hydrolysis of activated Ala-AMP. The other activity is designated 'posttransfer' editing and involves deacylation of mischarged Ala-tRNA(Pro). The misacylated Cys-tRNA(Pro) is not edited by ProRS. The polypeptide is Proline--tRNA ligase (proS) (Mycolicibacterium smegmatis (strain ATCC 700084 / mc(2)155) (Mycobacterium smegmatis)).